The primary structure comprises 272 residues: Phosphate import ATP-binding protein PstB (272 aa).

In terms of domain architecture, ABC transporter spans 26–267 (LEIRNLDLSY…PRKRKTEDYI (242 aa)). An ATP-binding site is contributed by 58-65 (GPSGCGKS).

This sequence belongs to the ABC transporter superfamily. Phosphate importer (TC 3.A.1.7) family. The complex is composed of two ATP-binding proteins (PstB), two transmembrane proteins (PstC and PstA) and a solute-binding protein (PstS).

The protein localises to the cell inner membrane. It catalyses the reaction phosphate(out) + ATP + H2O = ADP + 2 phosphate(in) + H(+). Part of the ABC transporter complex PstSACB involved in phosphate import. Responsible for energy coupling to the transport system. This is Phosphate import ATP-binding protein PstB from Shewanella denitrificans (strain OS217 / ATCC BAA-1090 / DSM 15013).